A 382-amino-acid chain; its full sequence is Low-specificity L-threonine aldolase (382 aa).

K214 carries the N6-(pyridoxal phosphate)lysine modification.

This sequence belongs to the threonine aldolase family. In terms of assembly, homotetramer. The cofactor is pyridoxal 5'-phosphate.

It catalyses the reaction L-threonine = acetaldehyde + glycine. The enzyme catalyses L-allo-threonine = acetaldehyde + glycine. The protein operates within amino-acid degradation; L-threonine degradation via aldolase pathway; acetaldehyde and glycine from L-threonine: step 1/1. This chain is Low-specificity L-threonine aldolase (GLY1), found in Eremothecium gossypii (strain ATCC 10895 / CBS 109.51 / FGSC 9923 / NRRL Y-1056) (Yeast).